We begin with the raw amino-acid sequence, 223 residues long: Ubiquitin-conjugating enzyme E2 S (223 aa).

Met1 is subject to N-acetylmethionine. Residues 11-157 (HIIRLVYKEV…ARLLTEIHGG (147 aa)) form the UBC core domain. Cys95 (glycyl thioester intermediate) is an active-site residue. The interval 155 to 223 (HGGAGGPSGG…TDKKRALRRL (69 aa)) is disordered. Low complexity predominate over residues 169–195 (GRATASGAAASTADPTAPGGPAGAEGP). A Phosphoserine modification is found at Ser174. Residues 209-223 (AAKKKTDKKRALRRL) are compositionally biased toward basic residues.

This sequence belongs to the ubiquitin-conjugating enzyme family. In terms of assembly, component of the APC/C complex, composed of at least 14 distinct subunits that assemble into a complex of at least 19 chains with a combined molecular mass of around 1.2 MDa. Within this complex, directly interacts with ANAPC2 and ANAPC4. Interacts with CDC20, FZR1/CDH1 and VHL. In terms of processing, autoubiquitinated by the APC/C complex during G1, leading to its degradation by the proteasome.

It catalyses the reaction S-ubiquitinyl-[E1 ubiquitin-activating enzyme]-L-cysteine + [E2 ubiquitin-conjugating enzyme]-L-cysteine = [E1 ubiquitin-activating enzyme]-L-cysteine + S-ubiquitinyl-[E2 ubiquitin-conjugating enzyme]-L-cysteine.. Its pathway is protein modification; protein ubiquitination. In terms of biological role, accepts ubiquitin from the E1 complex and catalyzes its covalent attachment to other proteins. Catalyzes 'Lys-11'-linked polyubiquitination. Acts as an essential factor of the anaphase promoting complex/cyclosome (APC/C), a cell cycle-regulated ubiquitin ligase that controls progression through mitosis. Acts by specifically elongating 'Lys-11'-linked polyubiquitin chains initiated by the E2 enzyme UBE2C/UBCH10 on APC/C substrates, enhancing the degradation of APC/C substrates by the proteasome and promoting mitotic exit. Also acts by elongating ubiquitin chains initiated by the E2 enzyme UBE2D1/UBCH5 in vitro; it is however unclear whether UBE2D1/UBCH5 acts as an E2 enzyme for the APC/C in vivo. Also involved in ubiquitination and subsequent degradation of VHL, resulting in an accumulation of HIF1A. In vitro able to promote polyubiquitination using all 7 ubiquitin Lys residues, except 'Lys-48'-linked polyubiquitination. The polypeptide is Ubiquitin-conjugating enzyme E2 S (UBE2S) (Bos taurus (Bovine)).